We begin with the raw amino-acid sequence, 236 residues long: Dolichol-phosphate mannosyltransferase (236 aa).

Positions 9, 11, 13, 40, 42, 95, 96, 97, 124, 160, 211, and 217 each coordinate GDP-alpha-D-mannose. A Mg(2+)-binding site is contributed by D97. Mn(2+) is bound at residue D97.

This sequence belongs to the glycosyltransferase 2 family. As to quaternary structure, component of the dolichol-phosphate mannose (DPM) synthase complex composed of dpm1, dpm2 and dpm3. Requires Mg(2+) as cofactor. Mn(2+) is required as a cofactor. The cofactor is Ca(2+).

The protein localises to the endoplasmic reticulum. The catalysed reaction is a di-trans,poly-cis-dolichyl phosphate + GDP-alpha-D-mannose = a di-trans,poly-cis-dolichyl beta-D-mannosyl phosphate + GDP. The protein operates within protein modification; protein glycosylation. In terms of biological role, transfers mannose from GDP-mannose to dolichol monophosphate to form dolichol phosphate mannose (Dol-P-Man) which is the mannosyl donor in pathways leading to N-glycosylation, glycosyl phosphatidylinositol membrane anchoring, and O-mannosylation of proteins. This is Dolichol-phosphate mannosyltransferase from Schizosaccharomyces pombe (strain 972 / ATCC 24843) (Fission yeast).